Consider the following 362-residue polypeptide: Ribosomal RNA large subunit methyltransferase M (362 aa).

S-adenosyl-L-methionine contacts are provided by residues serine 194, 227–230, aspartate 246, aspartate 266, and aspartate 284; that span reads CPGG. Catalysis depends on lysine 313, which acts as the Proton acceptor.

Belongs to the class I-like SAM-binding methyltransferase superfamily. RNA methyltransferase RlmE family. RlmM subfamily. In terms of assembly, monomer.

It is found in the cytoplasm. The enzyme catalyses cytidine(2498) in 23S rRNA + S-adenosyl-L-methionine = 2'-O-methylcytidine(2498) in 23S rRNA + S-adenosyl-L-homocysteine + H(+). Its function is as follows. Catalyzes the 2'-O-methylation at nucleotide C2498 in 23S rRNA. In Aggregatibacter aphrophilus (strain NJ8700) (Haemophilus aphrophilus), this protein is Ribosomal RNA large subunit methyltransferase M.